The sequence spans 161 residues: MKFFIVLALCIVGAIADPVSSDQANAIRASWAGVKHNEVDILAAVFSDHPDIQARFPQFAGKDLASIKDTGAFATHAGRIVGFISEIVALVGNESNAPAMATLINELSTSHHNRGITKGQFNEFRSSLVSYLSSHASWNDATADAWTHGLDNIFGMIFAHL.

Residues Met1–Ala16 form the signal peptide. The Globin domain occupies Pro18–Leu161. 2 residues coordinate heme b: His76 and His111.

This sequence belongs to the globin family. In terms of assembly, homodimer.

The sequence is that of Globin CTT-IX (CTT-9) from Chironomus thummi thummi (Midge).